Reading from the N-terminus, the 276-residue chain is Protein canopy homolog 3 (276 aa).

The N-terminal stretch at 1–16 is a signal peptide; it reads MNVFISVVLFLGSARA. In terms of domain architecture, Saposin B-type spans 30–269; the sequence is NKCEVCKFVS…EEEIQKKVPL (240 aa). Intrachain disulfides connect Cys32–Cys190, Cys35–Cys178, and Cys88–Cys150. A coiled-coil region spans residues 137-162; that stretch reads NETSAEVADLKKQCDVMVEQYEDVIE. Residues 206 to 276 are disordered; sequence AEDKKKKKGK…VPLNQPKTEL (71 aa). Basic residues-rich tracts occupy residues 210–219 and 228–239; these read KKKKGKKKKG and KEKKVKKKKKKS. The span at 240-252 shows a compositional bias: basic and acidic residues; that stretch reads KISDSESSKRRME.

It belongs to the canopy family.

The protein resides in the endoplasmic reticulum. In terms of biological role, toll-like receptor (TLR)-specific co-chaperone for HSP90B1. Required for proper TLR folding and hence controls TLR exit from the endoplasmic reticulum. Consequently, required for immune responses. This Danio rerio (Zebrafish) protein is Protein canopy homolog 3 (cnpy3).